The primary structure comprises 118 residues: D-dopachrome decarboxylase (118 aa).

Proline 2 is modified (N-acetylproline). Lysine 33 is subject to N6-acetyllysine.

The protein belongs to the MIF family. In terms of assembly, homotrimer. Highly expressed in the liver and at lower levels in the heart, lung and pancreas.

The protein resides in the cytoplasm. The enzyme catalyses D-dopachrome + H(+) = 5,6-dihydroxyindole + CO2. Functionally, tautomerization of D-dopachrome with decarboxylation to give 5,6-dihydroxyindole (DHI). In Homo sapiens (Human), this protein is D-dopachrome decarboxylase (DDT).